Here is a 78-residue protein sequence, read N- to C-terminus: Delta-conotoxin-like Ai6.1 (78 aa).

Positions 1-22 are cleaved as a signal peptide; the sequence is MKLTCVMIVAVLFLTAWTFATA. Residues 23–49 constitute a propeptide that is removed on maturation; the sequence is DDPRNGLGNLFSNAHHEMKNPEASKLN. Disulfide bonds link cysteine 53-cysteine 68, cysteine 60-cysteine 72, and cysteine 67-cysteine 77.

This sequence belongs to the conotoxin O1 superfamily. In terms of tissue distribution, expressed by the venom duct.

It localises to the secreted. Functionally, delta-conotoxins bind to site 6 of voltage-gated sodium channels (Nav) and inhibit the inactivation process. The protein is Delta-conotoxin-like Ai6.1 of Conus ammiralis (Admiral cone).